The primary structure comprises 65 residues: Potassium channel toxin kappa-KTx 2.7 (65 aa).

A signal peptide spans 1 to 26 (MKTSGTVYVFLLLLAFGIFTDISSAC). A propeptide spanning residues 27 to 39 (SEQMDDEDSYEVE) is cleaved from the precursor. Intrachain disulfides connect cysteine 45–cysteine 63 and cysteine 49–cysteine 59.

This sequence belongs to the short scorpion toxin superfamily. Potassium channel inhibitor kappa-KTx family. Kappa-KTx 2 subfamily. In terms of tissue distribution, expressed by the venom gland.

The protein localises to the secreted. Its function is as follows. Weakly inhibits the Kv7.1/KCNQ1 channel (10 uM of the toxin inhibits currents by 17.8%). The polypeptide is Potassium channel toxin kappa-KTx 2.7 (Heterometrus petersii (Asian forest scorpion)).